Reading from the N-terminus, the 494-residue chain is DnaJ homolog subfamily C member 7 (494 aa).

Ala-2 bears the N-acetylalanine mark. TPR repeat units lie at residues Ala-28–Asn-61, Ala-62–Phe-95, Val-96–Asn-129, Val-142–Cys-175, Arg-177–Asn-209, Ala-210–His-243, Leu-256–Asn-289, Ala-294–Tyr-327, and Ile-328–Lys-361. A J domain is found at Asp-381–Gln-451. The residue at position 393 (Ser-393) is a Phosphoserine.

As to quaternary structure, associates with complexes containing chaperones HSP70 and HSP90. Interacts with the GAP domain of NF1. Interacts with HSP90AA1. Interacts with HSPA1A/B; the interaction is enhanced by ATP. Interacts with HSP90AB1. Interacts with PGR. Interacts with RAD9A; the interaction is interrupted by UV and heat shock treatments. Interacts with HUS1 and RAD1. Interacts with NR1I3. The DNAJC7-NR1I3 complex may also include HSP90. Interacts with HSPA8.

The protein localises to the cytoplasm. Its subcellular location is the nucleus. The protein resides in the cytoskeleton. Its function is as follows. Acts as a co-chaperone regulating the molecular chaperones HSP70 and HSP90 in folding of steroid receptors, such as the glucocorticoid receptor and the progesterone receptor. Proposed to act as a recycling chaperone by facilitating the return of chaperone substrates to early stages of chaperoning if further folding is required. In vitro, induces ATP-independent dissociation of HSP90 but not of HSP70 from the chaperone-substrate complexes. Recruits NR1I3 to the cytoplasm. The polypeptide is DnaJ homolog subfamily C member 7 (DNAJC7) (Homo sapiens (Human)).